The sequence spans 175 residues: MDKLADLNYTLSVITLMNDTLHSIIEDPGMAYFPYIASVLTVLFALHIASIPTMKIALKASKCSYKVIKYCIVTIINTLLKLAGYKEQVTTKDEIEQQMDRIVKEMRRQLEMIDKLTTREIEQVELLKRIHDNLITRPVDVIDMSKEFNQKNIKTLDEWESGKNPYEPSEVTASM.

Over M1–P28 the chain is Lumenal. N-linked (GlcNAc...) asparagine; by host glycans are attached at residues N8 and N18. The chain crosses the membrane as a helical; Signal-anchor for type III membrane protein span at residues G29–I51. Residues P52–M175 are Cytoplasmic-facing. Ca(2+) contacts are provided by E120 and Q123.

Belongs to the rotavirus NSP4 family. As to quaternary structure, homotetramer. Interacts with the immature particle in the viroplasm. Interacts with host CAV1, early and late in infection. Interacts with host integrin ITGA1/ITGB1 heterodimer. Interacts with host integrin ITGA2/ITGB1 heterodimer. Interaction with microtubules blocks trafficking to the Golgi apparatus. The N-glycosyl content is primarily Man(9)GlcNAc, with a small amount of Man(8)GlcNAc.

The protein localises to the host rough endoplasmic reticulum membrane. Its subcellular location is the host membrane. It localises to the host caveola. The protein resides in the secreted. In terms of biological role, plays an essential role in the virus replication cycle by acting as a viroporin. Creates a pore in the host endoplasmic reticulum and as a consequence releases Ca(2+) in the cytoplasm of infected cell. In turn, high levels of cytoplasmic calcium trigger membrane trafficking and transport of viral ER-associated proteins to viroplasms, sites of viral genome replication and immature particle assembly. The secreted form acts as an enterotoxin that causes phospholipase C-dependent elevation of the intracellular calcium concentration in host intestinal mucosa cells. Increased concentration of intracellular calcium disrupts the cytoskeleton and the tight junctions, raising the paracellular permeability. Potentiates chloride ion secretion through a calcium ion-dependent signaling pathway, inducing age-dependent diarrhea. To perform this enterotoxigenic role in vivo, NSP4 is released from infected enterocytes in a soluble form capable of diffusing within the intestinal lumen and interacting with host plasma membrane receptors on neighboring epithelial cells such as integrins ITGA1/ITGB1 and ITGA2/ITGB1. In Homo sapiens (Human), this protein is Non-structural glycoprotein 4.